Here is a 456-residue protein sequence, read N- to C-terminus: L-2-hydroxyglutarate dehydrogenase, mitochondrial (456 aa).

Residues 1-20 (MLKTSFLLSKRNAVSLSRVL) constitute a mitochondrion transit peptide.

It belongs to the L2HGDH family. The cofactor is FAD.

Its subcellular location is the mitochondrion. It carries out the reaction (S)-2-hydroxyglutarate + A = 2-oxoglutarate + AH2. The chain is L-2-hydroxyglutarate dehydrogenase, mitochondrial from Nematostella vectensis (Starlet sea anemone).